The chain runs to 780 residues: ATP-dependent 6-phosphofructokinase, liver type (780 aa).

Residue alanine 2 is modified to N-acetylalanine. The segment at 2–390 (ATVDLEKLRM…NWKIYKLLAH (389 aa)) is N-terminal catalytic PFK domain 1. ATP-binding positions include glycine 25, 88 to 89 (RC), and 118 to 121 (GDGS). Aspartate 119 contributes to the Mg(2+) binding site. Substrate contacts are provided by residues 164 to 166 (SID), arginine 201, 208 to 210 (MGR), glutamate 264, arginine 292, and 298 to 301 (HVQR). Aspartate 166 serves as the catalytic Proton acceptor. Phosphoserine is present on serine 377. The interval 391–400 (QKVSKEKSNF) is interdomain linker. The C-terminal regulatory PFK domain 2 stretch occupies residues 401–780 (SLAILNVGAP…RRTLSIDKGF (380 aa)). Beta-D-fructose 2,6-bisphosphate contacts are provided by residues arginine 470, 527 to 531 (TISNN), arginine 565, 572 to 574 (MGG), and glutamate 628. Serine 529 carries an O-linked (GlcNAc) serine glycan. Position 640 is a phosphotyrosine (tyrosine 640). Residues arginine 654, 660-663 (HLQQ), and arginine 734 contribute to the beta-D-fructose 2,6-bisphosphate site. Serine 775 is modified (phosphoserine).

The protein belongs to the phosphofructokinase type A (PFKA) family. ATP-dependent PFK group I subfamily. Eukaryotic two domain clade 'E' sub-subfamily. In terms of assembly, homo- and heterotetramers. Phosphofructokinase (PFK) enzyme functions as a tetramer composed of different combinations of 3 types of subunits, called PFKM (M), PFKL (L) and PFKP (P). The composition of the PFK tetramer differs according to the tissue type it is present in. The kinetic and regulatory properties of the tetrameric enzyme are dependent on the subunit composition, hence can vary across tissues. The cofactor is Mg(2+). In terms of processing, glcNAcylation at Ser-529 by OGT decreases enzyme activity, leading to redirect glucose flux through the oxidative pentose phosphate pathway. Glycosylation is stimulated by both hypoxia and glucose deprivation.

It localises to the cytoplasm. The catalysed reaction is beta-D-fructose 6-phosphate + ATP = beta-D-fructose 1,6-bisphosphate + ADP + H(+). It functions in the pathway carbohydrate degradation; glycolysis; D-glyceraldehyde 3-phosphate and glycerone phosphate from D-glucose: step 3/4. Its activity is regulated as follows. Allosterically activated by ADP, AMP, or fructose 2,6-bisphosphate, and allosterically inhibited by ATP or citrate. GlcNAcylation by OGT overcomes allosteric regulation. Functionally, catalyzes the phosphorylation of D-fructose 6-phosphate to fructose 1,6-bisphosphate by ATP, the first committing step of glycolysis. Negatively regulates the phagocyte oxidative burst in response to bacterial infection by controlling cellular NADPH biosynthesis and NADPH oxidase-derived reactive oxygen species. Upon macrophage activation, drives the metabolic switch toward glycolysis, thus preventing glucose turnover that produces NADPH via pentose phosphate pathway. This Rattus norvegicus (Rat) protein is ATP-dependent 6-phosphofructokinase, liver type (Pfkl).